The primary structure comprises 324 residues: Lipid droplet-associated hydrolase (324 aa).

Catalysis depends on Ser-136, which acts as the Nucleophile. Catalysis depends on charge relay system residues Asp-270 and His-299.

The protein belongs to the AB hydrolase superfamily. LDAH family.

The protein resides in the lipid droplet. Its subcellular location is the endoplasmic reticulum. It carries out the reaction a cholesterol ester + H2O = cholesterol + a fatty acid + H(+). Functionally, probable serine lipid hydrolase associated with lipid droplets. Has low cholesterol esterase activity. Appears to lack triglyceride lipase activity. Involved in cholesterol and triglyceride homeostasis; stimulates cellular triglyceride accumulation and cellular cholesterol release. The sequence is that of Lipid droplet-associated hydrolase from Gallus gallus (Chicken).